A 335-amino-acid polypeptide reads, in one-letter code: Pyridoxal 5'-phosphate synthase subunit PdxS (335 aa).

Position 30 (Asp30) interacts with D-ribose 5-phosphate. Lys87 functions as the Schiff-base intermediate with D-ribose 5-phosphate in the catalytic mechanism. A D-ribose 5-phosphate-binding site is contributed by Gly159. Arg171 contributes to the D-glyceraldehyde 3-phosphate binding site. Residues Gly257 and 278–279 each bind D-ribose 5-phosphate; that span reads GS.

It belongs to the PdxS/SNZ family. In the presence of PdxT, forms a dodecamer of heterodimers.

It catalyses the reaction aldehydo-D-ribose 5-phosphate + D-glyceraldehyde 3-phosphate + L-glutamine = pyridoxal 5'-phosphate + L-glutamate + phosphate + 3 H2O + H(+). Its pathway is cofactor biosynthesis; pyridoxal 5'-phosphate biosynthesis. Its function is as follows. Catalyzes the formation of pyridoxal 5'-phosphate from ribose 5-phosphate (RBP), glyceraldehyde 3-phosphate (G3P) and ammonia. The ammonia is provided by the PdxT subunit. Can also use ribulose 5-phosphate and dihydroxyacetone phosphate as substrates, resulting from enzyme-catalyzed isomerization of RBP and G3P, respectively. This Pyrococcus furiosus (strain ATCC 43587 / DSM 3638 / JCM 8422 / Vc1) protein is Pyridoxal 5'-phosphate synthase subunit PdxS.